The primary structure comprises 125 residues: Phosphoribosyl-AMP cyclohydrolase (125 aa).

Residue Asp74 participates in Mg(2+) binding. A Zn(2+)-binding site is contributed by Cys75. Positions 76 and 78 each coordinate Mg(2+). 2 residues coordinate Zn(2+): Cys92 and Cys99.

It belongs to the PRA-CH family. Homodimer. Requires Mg(2+) as cofactor. Zn(2+) is required as a cofactor.

Its subcellular location is the cytoplasm. The enzyme catalyses 1-(5-phospho-beta-D-ribosyl)-5'-AMP + H2O = 1-(5-phospho-beta-D-ribosyl)-5-[(5-phospho-beta-D-ribosylamino)methylideneamino]imidazole-4-carboxamide. It functions in the pathway amino-acid biosynthesis; L-histidine biosynthesis; L-histidine from 5-phospho-alpha-D-ribose 1-diphosphate: step 3/9. Its function is as follows. Catalyzes the hydrolysis of the adenine ring of phosphoribosyl-AMP. This chain is Phosphoribosyl-AMP cyclohydrolase, found in Geobacter sp. (strain M21).